Reading from the N-terminus, the 272-residue chain is Acyl-[acyl-carrier-protein]--UDP-N-acetylglucosamine O-acyltransferase (272 aa).

Belongs to the transferase hexapeptide repeat family. LpxA subfamily. Homotrimer.

The protein localises to the cytoplasm. It catalyses the reaction a (3R)-hydroxyacyl-[ACP] + UDP-N-acetyl-alpha-D-glucosamine = a UDP-3-O-[(3R)-3-hydroxyacyl]-N-acetyl-alpha-D-glucosamine + holo-[ACP]. It participates in glycolipid biosynthesis; lipid IV(A) biosynthesis; lipid IV(A) from (3R)-3-hydroxytetradecanoyl-[acyl-carrier-protein] and UDP-N-acetyl-alpha-D-glucosamine: step 1/6. Involved in the biosynthesis of lipid A, a phosphorylated glycolipid that anchors the lipopolysaccharide to the outer membrane of the cell. In Rhizobium etli (strain ATCC 51251 / DSM 11541 / JCM 21823 / NBRC 15573 / CFN 42), this protein is Acyl-[acyl-carrier-protein]--UDP-N-acetylglucosamine O-acyltransferase.